The primary structure comprises 72 residues: Exodeoxyribonuclease 7 small subunit (72 aa).

The protein belongs to the XseB family. As to quaternary structure, heterooligomer composed of large and small subunits.

The protein resides in the cytoplasm. The enzyme catalyses Exonucleolytic cleavage in either 5'- to 3'- or 3'- to 5'-direction to yield nucleoside 5'-phosphates.. Its function is as follows. Bidirectionally degrades single-stranded DNA into large acid-insoluble oligonucleotides, which are then degraded further into small acid-soluble oligonucleotides. In Ruegeria pomeroyi (strain ATCC 700808 / DSM 15171 / DSS-3) (Silicibacter pomeroyi), this protein is Exodeoxyribonuclease 7 small subunit.